We begin with the raw amino-acid sequence, 229 residues long: Potassium/proton antiporter CemA (229 aa).

3 helical membrane-spanning segments follow: residues 7-27 (FSPIFHLSFIVFLPWGIYLSF), 106-126 (MILRLSTNLICVVIISGFYIW), and 189-209 (IISGLVSTFPVILDTIFKYWI).

This sequence belongs to the CemA family.

The protein resides in the plastid membrane. It catalyses the reaction K(+)(in) + H(+)(out) = K(+)(out) + H(+)(in). In terms of biological role, may be involved in proton extrusion. The polypeptide is Potassium/proton antiporter CemA (Cuscuta reflexa (Southern Asian dodder)).